Here is a 395-residue protein sequence, read N- to C-terminus: Polar tube protein 1 (395 aa).

Residues 1–22 (MKGISKILSASIALMKLENVYS) form the signal peptide. 2 disordered regions span residues 59–95 (CASGSQDTYSPSPAAPTSPVTPGKTSENETSPSAPAE) and 111–133 (PGTTSGTTPGSGPCETPEQQQPL). Positions 68–80 (SPSPAAPTSPVTP) are enriched in low complexity. A compositionally biased stretch (polar residues) spans 81–91 (GKTSENETSPS). Asparagine 86 carries N-linked (GlcNAc...) asparagine glycosylation. The span at 111 to 128 (PGTTSGTTPGSGPCETPE) shows a compositional bias: low complexity. Residue asparagine 173 is glycosylated (N-linked (GlcNAc...) asparagine). Tandem repeats lie at residues 179–204 (PGQQQILSGTLPPGATLCQGQAMPST), 205–230 (PGQQQILSGTLPPGVTLCQGQATPST), 231–256 (PGQQQVLSGTLPPGVTLCQGQATPST), and 257–282 (PGQQQVLSGTLLPGATLCQDQGMPGT). Residues 179–282 (PGQQQILSGT…LCQDQGMPGT (104 aa)) form a 4 X 26 AA approximate tandem repeats region. The tract at residues 277-300 (QGMPGTSGVPGQQGQSSGQCCAPQ) is disordered. Positions 280–300 (PGTSGVPGQQGQSSGQCCAPQ) are enriched in low complexity. Asparagine 311 is a glycosylation site (N-linked (GlcNAc...) asparagine).

As to quaternary structure, interacts with PTP2 and PTP3.

It is found in the spore polar tube. Functionally, involved with PTP2 and PTP3 in the formation of the polar tube through which the infectious agent is passed on to the host cell. Accounts for at least 70 percent of the mass of the polar tube. The chain is Polar tube protein 1 (PTP1) from Encephalitozoon cuniculi (strain GB-M1) (Microsporidian parasite).